Consider the following 561-residue polypeptide: DNA ligase B (561 aa).

Catalysis depends on Lys-125, which acts as the N6-AMP-lysine intermediate.

It belongs to the NAD-dependent DNA ligase family. LigB subfamily.

The enzyme catalyses NAD(+) + (deoxyribonucleotide)n-3'-hydroxyl + 5'-phospho-(deoxyribonucleotide)m = (deoxyribonucleotide)n+m + AMP + beta-nicotinamide D-nucleotide.. Functionally, catalyzes the formation of phosphodiester linkages between 5'-phosphoryl and 3'-hydroxyl groups in double-stranded DNA using NAD as a coenzyme and as the energy source for the reaction. In Salmonella paratyphi A (strain AKU_12601), this protein is DNA ligase B.